We begin with the raw amino-acid sequence, 124 residues long: ATP synthase epsilon chain (124 aa).

The interval 97–124 (ARVREASSEEEKSRAESELRAVKRSKEK) is disordered.

This sequence belongs to the ATPase epsilon chain family. As to quaternary structure, F-type ATPases have 2 components, CF(1) - the catalytic core - and CF(0) - the membrane proton channel. CF(1) has five subunits: alpha(3), beta(3), gamma(1), delta(1), epsilon(1). CF(0) has three main subunits: a, b and c.

It is found in the cell membrane. Functionally, produces ATP from ADP in the presence of a proton gradient across the membrane. The protein is ATP synthase epsilon chain of Corynebacterium urealyticum (strain ATCC 43042 / DSM 7109).